The sequence spans 525 residues: ATP synthase subunit alpha (525 aa).

Residue 169–176 (GDRQTGKT) coordinates ATP.

This sequence belongs to the ATPase alpha/beta chains family. F-type ATPases have 2 components, CF(1) - the catalytic core - and CF(0) - the membrane proton channel. CF(1) has five subunits: alpha(3), beta(3), gamma(1), delta(1), epsilon(1). CF(0) has three main subunits: a(1), b(2) and c(9-12). The alpha and beta chains form an alternating ring which encloses part of the gamma chain. CF(1) is attached to CF(0) by a central stalk formed by the gamma and epsilon chains, while a peripheral stalk is formed by the delta and b chains.

It is found in the cell membrane. The enzyme catalyses ATP + H2O + 4 H(+)(in) = ADP + phosphate + 5 H(+)(out). Functionally, produces ATP from ADP in the presence of a proton gradient across the membrane. The alpha chain is a regulatory subunit. The chain is ATP synthase subunit alpha from Mycoplasma capricolum subsp. capricolum (strain California kid / ATCC 27343 / NCTC 10154).